The primary structure comprises 170 residues: MSNLYESIRKYKCGYIEEILNILDMFDPLLNKFQRNSCYEDMKSELSLFMFNLIDNFPLEKDCFKEDKFIINYIYKSLKNKFIQVNKLHQKVKSYETNIDIIWVNNCDYANLLSTVIFEDIIKDLTQNEKNILRKIYLHGLRESEISRELNISRQAVNKTHLRALEKLKN.

The segment at 122-169 (IKDLTQNEKNILRKIYLHGLRESEISRELNISRQAVNKTHLRALEKLK) is sigma-70 factor domain-4. Residues 143 to 162 (ESEISRELNISRQAVNKTHL) constitute a DNA-binding region (H-T-H motif).

This sequence belongs to the sigma-70 factor family.

In terms of biological role, sigma factors are initiation factors that promote the attachment of RNA polymerase to specific initiation sites and are then released. Transcriptional regulator specifically required to activate expression of the toxin gene locus, composed of tcsL and tcdE/utxA. This Paraclostridium sordellii (strain ATCC 9714 / DSM 2141 / JCM 3814 / LMG 15708 / NCIMB 10717 / 211) (Clostridium sordellii) protein is RNA polymerase sigma factor TcsR.